Here is a 419-residue protein sequence, read N- to C-terminus: Phosphoglycerate kinase (419 aa).

Positions 24, 25, 26, 27, 40, 63, 64, 66, 67, 122, 123, 169, and 170 each coordinate (2R)-3-phosphoglycerate. Residue glycine 213 participates in ADP binding. Glycine 213 serves as a coordination point for CDP. Alanine 214 and lysine 215 together coordinate AMP. Alanine 214 is an ATP binding site. Alanine 214 lines the Mg(2+) pocket. Mg(2+) is bound by residues alanine 217 and aspartate 218. A CDP-binding site is contributed by aspartate 218. Residue lysine 219 participates in AMP binding. Lysine 219 lines the ATP pocket. An ADP-binding site is contributed by glycine 237. Residue glycine 237 participates in CDP binding. Residues glycine 238 and glycine 313 each coordinate AMP. The ATP site is built by glycine 238 and glycine 313. 2 residues coordinate CDP: glycine 338 and phenylalanine 343. Residue phenylalanine 343 participates in ADP binding. Glutamate 344 serves as a coordination point for AMP. ATP is bound by residues glutamate 344, aspartate 375, and threonine 376. Aspartate 375 contacts Mg(2+).

Belongs to the phosphoglycerate kinase family. In terms of assembly, monomer. The cofactor is Mg(2+).

The enzyme catalyses (2R)-3-phosphoglycerate + ATP = (2R)-3-phospho-glyceroyl phosphate + ADP. Its pathway is carbohydrate degradation; glycolysis; pyruvate from D-glyceraldehyde 3-phosphate: step 2/5. The sequence is that of Phosphoglycerate kinase (PGK) from Sterkiella nova (Ciliate).